The chain runs to 299 residues: 4-diphosphocytidyl-2-C-methyl-D-erythritol kinase (299 aa).

The active site involves Lys17. An ATP-binding site is contributed by 103–113; sequence PVASGIGGGSG. Residue Asp145 is part of the active site.

The protein belongs to the GHMP kinase family. IspE subfamily.

The catalysed reaction is 4-CDP-2-C-methyl-D-erythritol + ATP = 4-CDP-2-C-methyl-D-erythritol 2-phosphate + ADP + H(+). The protein operates within isoprenoid biosynthesis; isopentenyl diphosphate biosynthesis via DXP pathway; isopentenyl diphosphate from 1-deoxy-D-xylulose 5-phosphate: step 3/6. In terms of biological role, catalyzes the phosphorylation of the position 2 hydroxy group of 4-diphosphocytidyl-2C-methyl-D-erythritol. The protein is 4-diphosphocytidyl-2-C-methyl-D-erythritol kinase of Bartonella tribocorum (strain CIP 105476 / IBS 506).